Consider the following 183-residue polypeptide: Ribulose bisphosphate carboxylase small subunit, chloroplastic (183 aa).

The transit peptide at 1-59 directs the protein to the chloroplast; sequence MASSMISSGTVATVSADRPAPAQARMVAPFNGLKSSSAFPVTRKSNDITSIASNGGRVQ.

The protein belongs to the RuBisCO small chain family. In terms of assembly, heterohexadecamer of 8 large and 8 small subunits.

The protein resides in the plastid. It is found in the chloroplast. Functionally, ruBisCO catalyzes two reactions: the carboxylation of D-ribulose 1,5-bisphosphate, the primary event in carbon dioxide fixation, as well as the oxidative fragmentation of the pentose substrate. Both reactions occur simultaneously and in competition at the same active site. Although the small subunit is not catalytic it is essential for maximal activity. This chain is Ribulose bisphosphate carboxylase small subunit, chloroplastic, found in Pyrus pyrifolia (Chinese pear).